The following is a 142-amino-acid chain: uncharacterized protein (142 aa).

A run of 3 helical transmembrane segments spans residues 3 to 23, 30 to 50, and 91 to 111; these read LIFI…FNLL, SVSW…AVWI, and FFLL…AYFS.

It is found in the membrane. This is an uncharacterized protein from Saccharomyces cerevisiae (strain ATCC 204508 / S288c) (Baker's yeast).